The chain runs to 732 residues: Catalase-peroxidase (732 aa).

The interval Met1–Asn20 is disordered. The segment at residues Trp92–Tyr220 is a cross-link (tryptophyl-tyrosyl-methioninium (Trp-Tyr) (with M-246)). Catalysis depends on His93, which acts as the Proton acceptor. The tryptophyl-tyrosyl-methioninium (Tyr-Met) (with W-92) cross-link spans Tyr220–Met246. His261 serves as a coordination point for heme b.

It belongs to the peroxidase family. Peroxidase/catalase subfamily. Homodimer or homotetramer. Heme b is required as a cofactor. In terms of processing, formation of the three residue Trp-Tyr-Met cross-link is important for the catalase, but not the peroxidase activity of the enzyme.

It carries out the reaction H2O2 + AH2 = A + 2 H2O. The catalysed reaction is 2 H2O2 = O2 + 2 H2O. Its function is as follows. Bifunctional enzyme with both catalase and broad-spectrum peroxidase activity. The protein is Catalase-peroxidase of Desulfosudis oleivorans (strain DSM 6200 / JCM 39069 / Hxd3) (Desulfococcus oleovorans).